Here is a 294-residue protein sequence, read N- to C-terminus: Protein CHLOROPLAST J-LIKE DOMAIN 1, chloroplastic (294 aa).

A chloroplast-targeting transit peptide spans Met1 to Arg58. Residues Ala59–Asn164 are Stromal-facing. Positions Asn74–Ile152 are J-like domain. The helical transmembrane segment at Asp165 to Ile182 threads the bilayer. The Chloroplast intermembrane segment spans residues Lys183–Arg233. A helical membrane pass occupies residues Leu234–Leu256. The Stromal segment spans residues Asn257 to Glu275. The chain crosses the membrane as a helical span at residues Leu276 to Tyr293. A topological domain (chloroplast intermembrane) is located at residue Arg294.

As to quaternary structure, interacts (via J-like domain) with ARC6 (via J domain).

It localises to the plastid. It is found in the chloroplast inner membrane. Probably involved in the regulation of the fatty acid metabolic process in chloroplasts, especially chloroplastic galactolipids monogalactosyldiacylglycerol (MGDG) and digalactosyldiacylglycerol (DGDG). This Arabidopsis thaliana (Mouse-ear cress) protein is Protein CHLOROPLAST J-LIKE DOMAIN 1, chloroplastic.